Here is a 297-residue protein sequence, read N- to C-terminus: Oxidoreductase aprR (297 aa).

This sequence belongs to the NmrA-type oxidoreductase family. Isoflavone reductase subfamily.

It functions in the pathway secondary metabolite biosynthesis. In terms of biological role, oxidoreductase; part of the gene cluster that mediates the biosynthesis of the asperipin-2a, a bicyclic peptide that possesses two macrocyclic ether rings consisting of 14- and 17-membered paracyclophans. The pathway starts with the processing of the precursor aprA by kexin proteases to produce 11 identical copies of the hexapeptide Phe-Tyr-Tyr-Thr-Gly-Tyr. Macrocyclization of asperipin-2a may accompany an alpha-hydroxylation-dehydration sequence to give an imine, which is readily hydrolyzed to yield putative ketone intermediate. The reductase aprR may be required for the final reduction to yield asperipin-2a. This is Oxidoreductase aprR from Aspergillus flavus (strain ATCC 200026 / FGSC A1120 / IAM 13836 / NRRL 3357 / JCM 12722 / SRRC 167).